Consider the following 375-residue polypeptide: MRALLALEDGFVLEGRSFTGPGETGGEAIFNTGMTGYQEVLTDPSYAGQMVCMTYPLVGNYGVTREDMESGKVHVEAFIVKECCKVPSNWRSEISLPDYLKRHGVMGIEGIDTRALTRHLRIHGAMRGVISTQETDPARLVERARALPSMEGQNLVTRVAPAAPYRWDGERPQAVTLEPGGCAWVGKGPRLVVYDFGIKWNILRLLAQQGFDMLVVPPSFKAADVAAVGAQAVFLSNGPGDPATLKDEIAEIAKLAQTYPTAGICLGHQLLGHALGGRTMKLKFGHHGCNHPVKDLTTGRIEISSQNHGFCVDIDSLTDVEITHVNLNDGTLEGFAHKTKPVIAVQHHPEASPGPNDSRYFFARFRNMVREAAGC.

Positions 1–186 (MRALLALEDG…LEPGGCAWVG (186 aa)) are CPSase. L-glutamine is bound by residues S45, G238, and G240. Residues 190 to 375 (RLVVYDFGIK…RNMVREAAGC (186 aa)) enclose the Glutamine amidotransferase type-1 domain. C265 functions as the Nucleophile in the catalytic mechanism. Positions 266, 269, 307, 309, and 310 each coordinate L-glutamine. Active-site residues include H348 and E350.

It belongs to the CarA family. As to quaternary structure, composed of two chains; the small (or glutamine) chain promotes the hydrolysis of glutamine to ammonia, which is used by the large (or ammonia) chain to synthesize carbamoyl phosphate. Tetramer of heterodimers (alpha,beta)4.

The enzyme catalyses hydrogencarbonate + L-glutamine + 2 ATP + H2O = carbamoyl phosphate + L-glutamate + 2 ADP + phosphate + 2 H(+). It catalyses the reaction L-glutamine + H2O = L-glutamate + NH4(+). The protein operates within amino-acid biosynthesis; L-arginine biosynthesis; carbamoyl phosphate from bicarbonate: step 1/1. It participates in pyrimidine metabolism; UMP biosynthesis via de novo pathway; (S)-dihydroorotate from bicarbonate: step 1/3. Small subunit of the glutamine-dependent carbamoyl phosphate synthetase (CPSase). CPSase catalyzes the formation of carbamoyl phosphate from the ammonia moiety of glutamine, carbonate, and phosphate donated by ATP, constituting the first step of 2 biosynthetic pathways, one leading to arginine and/or urea and the other to pyrimidine nucleotides. The small subunit (glutamine amidotransferase) binds and cleaves glutamine to supply the large subunit with the substrate ammonia. The chain is Carbamoyl phosphate synthase small chain from Nitratidesulfovibrio vulgaris (strain ATCC 29579 / DSM 644 / CCUG 34227 / NCIMB 8303 / VKM B-1760 / Hildenborough) (Desulfovibrio vulgaris).